The following is a 445-amino-acid chain: mRNA cleavage and polyadenylation factor CLP1 (445 aa).

Residues Glu33 and 131–136 (SSGKTS) each bind ATP.

Belongs to the Clp1 family. Clp1 subfamily. In terms of assembly, component of a pre-mRNA cleavage factor complex. Interacts directly with PCF11.

Its subcellular location is the nucleus. In terms of biological role, required for endonucleolytic cleavage during polyadenylation-dependent pre-mRNA 3'-end formation. This chain is mRNA cleavage and polyadenylation factor CLP1, found in Eremothecium gossypii (strain ATCC 10895 / CBS 109.51 / FGSC 9923 / NRRL Y-1056) (Yeast).